The primary structure comprises 57 residues: Large ribosomal subunit protein uL30 (57 aa).

Belongs to the universal ribosomal protein uL30 family. Part of the 50S ribosomal subunit.

The protein is Large ribosomal subunit protein uL30 of Clostridium acetobutylicum (strain ATCC 824 / DSM 792 / JCM 1419 / IAM 19013 / LMG 5710 / NBRC 13948 / NRRL B-527 / VKM B-1787 / 2291 / W).